The following is a 352-amino-acid chain: Elongation factor Tu, mitochondrial (352 aa).

The tr-type G domain occupies 45–241; that stretch reads RPHVNVGTIG…AIDTHIPLPH (197 aa). The interval 54–61 is G1; sequence GHVDHGKT. GTP-binding residues include aspartate 57, glycine 59, lysine 60, threonine 61, and threonine 62. Residue threonine 61 participates in Mg(2+) binding. Positions 95–99 are G2; the sequence is GITIN. The segment at 116 to 119 is G3; the sequence is DCPG. Residues asparagine 171, aspartate 174, serine 209, alanine 210, and leucine 211 each contribute to the GTP site. The tract at residues 171–174 is G4; the sequence is NKAD. The G5 stretch occupies residues 209-211; that stretch reads SAL.

It is found in the mitochondrion. It catalyses the reaction GTP + H2O = GDP + phosphate + H(+). Its function is as follows. GTP hydrolase that promotes the GTP-dependent binding of aminoacyl-tRNA to the A-site of ribosomes during protein biosynthesis. This chain is Elongation factor Tu, mitochondrial, found in Gallus gallus (Chicken).